We begin with the raw amino-acid sequence, 473 residues long: Sensor histidine kinase GtrS (473 aa).

Topologically, residues 1 to 8 are cytoplasmic; that stretch reads MPRSLLGR. The helical transmembrane segment at 9–29 threads the bilayer; it reads MLLLTLLAVLVAQGLSSLFWL. The Periplasmic segment spans residues 30 to 197; sequence SHLRSSQREG…LEPEGLQPQQ (168 aa). A helical transmembrane segment spans residues 198-218; the sequence is VLSIVFTSLLLLLFTGLLMHW. Residues 217 to 269 enclose the HAMP domain; the sequence is HWQSRPLKRLARAARDLALGSPSAALEERGASELVEVARAFNTMHERIDRYLN. At 219–473 the chain is on the cytoplasmic side; that stretch reads QSRPLKRLAR…SLRLPRLGLE (255 aa). The Histidine kinase domain maps to 277–471; the sequence is AISHDLRTPI…RVSLRLPRLG (195 aa). The residue at position 280 (His-280) is a Phosphohistidine; by autocatalysis.

Post-translationally, autophosphorylated.

The protein localises to the cell inner membrane. It carries out the reaction ATP + protein L-histidine = ADP + protein N-phospho-L-histidine.. Functionally, member of the two-component regulatory system GtrS/GltR involved in the regulation of glucose metabolism and transport, as well as regulation of the exotoxin A gene expression. GtrS recognizes and binds 2-ketogluconate and 6-phosphogluconate via its sensor domain, which accelerates GtrS autophosphorylation and concomitant transphosphorylation and regulation of the response regulator GltR. Plays a key role during bacteria-host interactions and is required for optimal colonization and dissemination in a mouse model of infection. Contributes to modulation of the type III secretion system (T3SS) in response to host cells via the regulation of the OprB transport system. This chain is Sensor histidine kinase GtrS, found in Pseudomonas aeruginosa (strain ATCC 15692 / DSM 22644 / CIP 104116 / JCM 14847 / LMG 12228 / 1C / PRS 101 / PAO1).